The sequence spans 410 residues: Chaperonin GroEL (410 aa).

Residues 29-32 (TAGP), Lys-50, and 86-90 (DGTTT) contribute to the ATP site.

The protein belongs to the chaperonin (HSP60) family. As to quaternary structure, forms a cylinder of 14 subunits composed of two heptameric rings stacked back-to-back. Interacts with the co-chaperonin GroES.

It localises to the cytoplasm. The catalysed reaction is ATP + H2O + a folded polypeptide = ADP + phosphate + an unfolded polypeptide.. Functionally, together with its co-chaperonin GroES, plays an essential role in assisting protein folding. The GroEL-GroES system forms a nano-cage that allows encapsulation of the non-native substrate proteins and provides a physical environment optimized to promote and accelerate protein folding. The chain is Chaperonin GroEL from Ehrlichia canis.